Here is a 654-residue protein sequence, read N- to C-terminus: Myrosinase-binding protein 2 (654 aa).

Jacalin-type lectin domains are found at residues 2-151 (SEKV…HFFA), 156-291 (LKHF…HFAP), 346-489 (PNKV…YFAP), and 502-645 (AKKL…HAVP). Positions 314 to 346 (VPAPSPAPAPSPAPAPAPAPAPAPTPAPAPAPP) are enriched in pro residues. A disordered region spans residues 314–355 (VPAPSPAPAPSPAPAPAPAPAPAPTPAPAPAPPNKVEALGGN).

The protein belongs to the jacalin lectin family. As to expression, expressed in flowers. Detected mainly in ovules and styles of immature flowers, but also in pistils, styles, stamens, petals and embryos. Not detected in leaves.

The protein is Myrosinase-binding protein 2 (MBP2) of Arabidopsis thaliana (Mouse-ear cress).